The primary structure comprises 175 residues: NADH-quinone oxidoreductase subunit I 1 (175 aa).

2 4Fe-4S ferredoxin-type domains span residues 44 to 74 and 90 to 119; these read LNRWPDGLEKCIGCELCAWACPADAIFVESA and RVYQINYLRCIGCGFCIEACPTRALTMIND. [4Fe-4S] cluster contacts are provided by Cys54, Cys57, Cys60, Cys64, Cys99, Cys102, Cys105, and Cys109.

The protein belongs to the complex I 23 kDa subunit family. NDH-1 is composed of 14 different subunits. Subunits NuoA, H, J, K, L, M, N constitute the membrane sector of the complex. [4Fe-4S] cluster serves as cofactor.

The protein resides in the cell membrane. It catalyses the reaction a quinone + NADH + 5 H(+)(in) = a quinol + NAD(+) + 4 H(+)(out). Its function is as follows. NDH-1 shuttles electrons from NADH, via FMN and iron-sulfur (Fe-S) centers, to quinones in the respiratory chain. The immediate electron acceptor for the enzyme in this species is believed to be menaquinone. Couples the redox reaction to proton translocation (for every two electrons transferred, four hydrogen ions are translocated across the cytoplasmic membrane), and thus conserves the redox energy in a proton gradient. The sequence is that of NADH-quinone oxidoreductase subunit I 1 from Mycolicibacterium paratuberculosis (strain ATCC BAA-968 / K-10) (Mycobacterium paratuberculosis).